Consider the following 273-residue polypeptide: Formamidopyrimidine-DNA glycosylase (273 aa).

Residue Pro-2 is the Schiff-base intermediate with DNA of the active site. The active-site Proton donor is Glu-3. Lys-58 (proton donor; for beta-elimination activity) is an active-site residue. His-91, Arg-109, and Arg-154 together coordinate DNA. The FPG-type zinc finger occupies 239–273 (FCYARTGEPCRICKTPIRQIVQGQRSTFYCPNCQK). Arg-263 acts as the Proton donor; for delta-elimination activity in catalysis.

It belongs to the FPG family. Monomer. Zn(2+) serves as cofactor.

The catalysed reaction is Hydrolysis of DNA containing ring-opened 7-methylguanine residues, releasing 2,6-diamino-4-hydroxy-5-(N-methyl)formamidopyrimidine.. It carries out the reaction 2'-deoxyribonucleotide-(2'-deoxyribose 5'-phosphate)-2'-deoxyribonucleotide-DNA = a 3'-end 2'-deoxyribonucleotide-(2,3-dehydro-2,3-deoxyribose 5'-phosphate)-DNA + a 5'-end 5'-phospho-2'-deoxyribonucleoside-DNA + H(+). In terms of biological role, involved in base excision repair of DNA damaged by oxidation or by mutagenic agents. Acts as a DNA glycosylase that recognizes and removes damaged bases. Has a preference for oxidized purines, such as 7,8-dihydro-8-oxoguanine (8-oxoG). Has AP (apurinic/apyrimidinic) lyase activity and introduces nicks in the DNA strand. Cleaves the DNA backbone by beta-delta elimination to generate a single-strand break at the site of the removed base with both 3'- and 5'-phosphates. This is Formamidopyrimidine-DNA glycosylase from Janthinobacterium sp. (strain Marseille) (Minibacterium massiliensis).